A 373-amino-acid polypeptide reads, in one-letter code: Pollen allergen KBG 31 (373 aa).

Positions 1–28 (MDKANGAYKTALKAASAVAPAEKFPVFQ) are cleaved as a signal peptide.

This sequence belongs to the Poa p IX/Phl p VI allergen family. Pollen.

This Poa pratensis (Kentucky bluegrass) protein is Pollen allergen KBG 31.